Here is a 92-residue protein sequence, read N- to C-terminus: uncharacterized protein (92 aa).

Helical transmembrane passes span 34–54 and 65–85; these read GLGIAVIIFCVCIIAFMFMFG and LLYIVVGGVLLWGAGTFASTV.

Its subcellular location is the cell membrane. This is an uncharacterized protein from Bacillus anthracis.